The chain runs to 166 residues: Large ribosomal subunit protein uL11 (166 aa).

Belongs to the universal ribosomal protein uL11 family.

This protein binds directly to 26S ribosomal RNA. The sequence is that of Large ribosomal subunit protein uL11 (RPL12) from Prunus armeniaca (Apricot).